The primary structure comprises 119 residues: Centrocin 1 (119 aa).

The signal sequence occupies residues 1 to 20; the sequence is MMIKIAVVLCAVMATTMVRA. Positions 21-50 are excised as a propeptide; that stretch reads KYVEEQELADLLDLLISEEVSSPDDAVALQ. 6'-bromotryptophan occurs at positions 52 and 53. Cysteines 75 and 110 form a disulfide. The propeptide occupies 81–104; sequence SPQEARAKVLEAFPEMKEADLDEE. N117 carries the post-translational modification Asparagine amide.

As to quaternary structure, heterodimer of a light and a heavy chain, probably disulfide-linked.

In terms of biological role, has antimicrobial activity against Gram-negative bacteria, Gram-positive bacteria and against fungi with minimum inhibitory concentration (MIC) between 0.78 uM and 50 uM. Shows little hemolytic activity even at a concentration of 100 uM. Functionally, has no antimicrobial activity. Shows no hemolytic activity. The chain is Centrocin 1 from Echinus esculentus (Sea urchin).